A 105-amino-acid chain; its full sequence is Malonate decarboxylase acyl carrier protein (105 aa).

At serine 28 the chain carries O-(phosphoribosyl dephospho-coenzyme A)serine.

It belongs to the MdcC family. Post-translationally, covalently binds the prosthetic group of malonate decarboxylase.

Its subcellular location is the cytoplasm. In terms of biological role, subunit of malonate decarboxylase, it is an acyl carrier protein to which acetyl and malonyl thioester residues are bound via a 2'-(5''-phosphoribosyl)-3'-dephospho-CoA prosthetic group and turn over during the catalytic mechanism. This Xanthomonas axonopodis pv. citri (strain 306) protein is Malonate decarboxylase acyl carrier protein.